A 366-amino-acid chain; its full sequence is Beta sliding clamp (366 aa).

It belongs to the beta sliding clamp family. Forms a ring-shaped head-to-tail homodimer around DNA which binds and tethers DNA polymerases and other proteins to the DNA. The DNA replisome complex has a single clamp-loading complex (3 tau and 1 each of delta, delta', psi and chi subunits) which binds 3 Pol III cores (1 core on the leading strand and 2 on the lagging strand) each with a beta sliding clamp dimer. Additional proteins in the replisome are other copies of gamma, psi and chi, Ssb, DNA helicase and RNA primase.

It localises to the cytoplasm. Functionally, confers DNA tethering and processivity to DNA polymerases and other proteins. Acts as a clamp, forming a ring around DNA (a reaction catalyzed by the clamp-loading complex) which diffuses in an ATP-independent manner freely and bidirectionally along dsDNA. Initially characterized for its ability to contact the catalytic subunit of DNA polymerase III (Pol III), a complex, multichain enzyme responsible for most of the replicative synthesis in bacteria; Pol III exhibits 3'-5' exonuclease proofreading activity. The beta chain is required for initiation of replication as well as for processivity of DNA replication. This chain is Beta sliding clamp (dnaN), found in Vibrio cholerae serotype O1 (strain ATCC 39315 / El Tor Inaba N16961).